The sequence spans 493 residues: Probable cytosol aminopeptidase (493 aa).

Mn(2+)-binding residues include lysine 256 and aspartate 261. The active site involves lysine 268. Positions 279, 338, and 340 each coordinate Mn(2+). The active site involves arginine 342.

It belongs to the peptidase M17 family. It depends on Mn(2+) as a cofactor.

The protein localises to the cytoplasm. The catalysed reaction is Release of an N-terminal amino acid, Xaa-|-Yaa-, in which Xaa is preferably Leu, but may be other amino acids including Pro although not Arg or Lys, and Yaa may be Pro. Amino acid amides and methyl esters are also readily hydrolyzed, but rates on arylamides are exceedingly low.. The enzyme catalyses Release of an N-terminal amino acid, preferentially leucine, but not glutamic or aspartic acids.. In terms of biological role, presumably involved in the processing and regular turnover of intracellular proteins. Catalyzes the removal of unsubstituted N-terminal amino acids from various peptides. This Phytoplasma australiense protein is Probable cytosol aminopeptidase.